We begin with the raw amino-acid sequence, 295 residues long: MRHLITAKDFNKVEIMELFKEASDFLDEKPRTFLKGKSITTIFFENSTRTLSSFESAARRLGARVLRLDVSRSSSSKGETLYDTAANLDAMSPNAIVVRHANSGVPLILAKHMHCPVVNGGDGKHAHPTQALLDLFTIYNHFQGDVEGKKICIVGDIKNSRVAASNIELLSRFNLDITLVAPPHFMPNTHLKKHYKLDENIIANSDIIMSLRTQTERHNKTVYASLKDYANDFCIQKSLVKDKKLILLHPGPVNRNIDISDEMMSDERTLVLKQVKNGVAIRMAVLKKLILENEG.

Residues Arg49 and Thr50 each contribute to the carbamoyl phosphate site. Lys77 provides a ligand contact to L-aspartate. Arg99, His127, and Gln130 together coordinate carbamoyl phosphate. L-aspartate is bound by residues Arg161 and Arg212. Carbamoyl phosphate is bound by residues Gly251 and Pro252.

The protein belongs to the aspartate/ornithine carbamoyltransferase superfamily. ATCase family. In terms of assembly, heterododecamer (2C3:3R2) of six catalytic PyrB chains organized as two trimers (C3), and six regulatory PyrI chains organized as three dimers (R2).

The enzyme catalyses carbamoyl phosphate + L-aspartate = N-carbamoyl-L-aspartate + phosphate + H(+). It functions in the pathway pyrimidine metabolism; UMP biosynthesis via de novo pathway; (S)-dihydroorotate from bicarbonate: step 2/3. In terms of biological role, catalyzes the condensation of carbamoyl phosphate and aspartate to form carbamoyl aspartate and inorganic phosphate, the committed step in the de novo pyrimidine nucleotide biosynthesis pathway. The sequence is that of Aspartate carbamoyltransferase catalytic subunit from Campylobacter jejuni subsp. jejuni serotype O:23/36 (strain 81-176).